A 209-amino-acid polypeptide reads, in one-letter code: Octanoyltransferase (209 aa).

A BPL/LPL catalytic domain is found at 30–209 (DHEPEIIYLV…IQTEFNKIFK (180 aa)). Substrate is bound by residues 69-76 (RGGKFTFH), 143-145 (AIG), and 156-158 (GVA). Cys-174 acts as the Acyl-thioester intermediate in catalysis.

Belongs to the LipB family.

The protein resides in the cytoplasm. It carries out the reaction octanoyl-[ACP] + L-lysyl-[protein] = N(6)-octanoyl-L-lysyl-[protein] + holo-[ACP] + H(+). The protein operates within protein modification; protein lipoylation via endogenous pathway; protein N(6)-(lipoyl)lysine from octanoyl-[acyl-carrier-protein]: step 1/2. Functionally, catalyzes the transfer of endogenously produced octanoic acid from octanoyl-acyl-carrier-protein onto the lipoyl domains of lipoate-dependent enzymes. Lipoyl-ACP can also act as a substrate although octanoyl-ACP is likely to be the physiological substrate. In Rickettsia rickettsii (strain Iowa), this protein is Octanoyltransferase.